The primary structure comprises 687 residues: Light-independent protochlorophyllide reductase subunit B (687 aa).

Residue Asp36 coordinates [4Fe-4S] cluster. Residue Asp441 is the Proton donor of the active site. Residue 576–577 (GM) participates in substrate binding.

Belongs to the ChlB/BchB/BchZ family. In terms of assembly, protochlorophyllide reductase is composed of three subunits; ChlL, ChlN and ChlB. Forms a heterotetramer of two ChlB and two ChlN subunits. [4Fe-4S] cluster is required as a cofactor.

The protein localises to the plastid. The protein resides in the chloroplast. It catalyses the reaction chlorophyllide a + oxidized 2[4Fe-4S]-[ferredoxin] + 2 ADP + 2 phosphate = protochlorophyllide a + reduced 2[4Fe-4S]-[ferredoxin] + 2 ATP + 2 H2O. The protein operates within porphyrin-containing compound metabolism; chlorophyll biosynthesis (light-independent). Component of the dark-operative protochlorophyllide reductase (DPOR) that uses Mg-ATP and reduced ferredoxin to reduce ring D of protochlorophyllide (Pchlide) to form chlorophyllide a (Chlide). This reaction is light-independent. The NB-protein (ChlN-ChlB) is the catalytic component of the complex. The polypeptide is Light-independent protochlorophyllide reductase subunit B (Chlamydomonas reinhardtii (Chlamydomonas smithii)).